A 347-amino-acid chain; its full sequence is 4-hydroxy-2-oxovalerate aldolase 1 (347 aa).

Residues 8–261 (VTLYDMSLLX…ETGIDLYKIM (254 aa)) form the Pyruvate carboxyltransferase domain. Histidine 20 serves as the catalytic Proton acceptor. Serine 171 and histidine 200 together coordinate substrate. Mn(2+) contacts are provided by histidine 200 and histidine 202. Residue tyrosine 291 participates in substrate binding.

It belongs to the 4-hydroxy-2-oxovalerate aldolase family.

It catalyses the reaction (S)-4-hydroxy-2-oxopentanoate = acetaldehyde + pyruvate. This Metapseudomonas furukawaii (Pseudomonas furukawaii) protein is 4-hydroxy-2-oxovalerate aldolase 1 (salH).